Reading from the N-terminus, the 102-residue chain is Protein translation factor SUI1 homolog (102 aa).

The protein belongs to the SUI1 family.

The chain is Protein translation factor SUI1 homolog from Methanococcus vannielii.